A 122-amino-acid chain; its full sequence is Large ribosomal subunit protein bL19c (122 aa).

It belongs to the bacterial ribosomal protein bL19 family.

Its subcellular location is the plastid. The protein resides in the chloroplast. In Gracilaria tenuistipitata var. liui (Red alga), this protein is Large ribosomal subunit protein bL19c.